We begin with the raw amino-acid sequence, 804 residues long: Leucine--tRNA ligase (804 aa).

A 'HIGH' region motif is present at residues 39 to 50 (PYPSGAGLHVGH). The short motif at 580–584 (KMSKS) is the 'KMSKS' region element. Lys-583 is a binding site for ATP.

The protein belongs to the class-I aminoacyl-tRNA synthetase family.

The protein resides in the cytoplasm. The catalysed reaction is tRNA(Leu) + L-leucine + ATP = L-leucyl-tRNA(Leu) + AMP + diphosphate. This is Leucine--tRNA ligase from Mycoplasma mycoides subsp. mycoides SC (strain CCUG 32753 / NCTC 10114 / PG1).